The chain runs to 494 residues: Chromosomal replication initiator protein DnaA (494 aa).

Positions 1 to 103 (MTNIGGPVVE…LRVEVIVRGM (103 aa)) are domain I, interacts with DnaA modulators. Residues 103–148 (MKRVSKGVVCRTSAAPVVLEGQTASSFVESYTEPSVKDIEAGVFGS) form a domain II region. Positions 149–371 (PLDSRYTFES…GAFNQLLFRQ (223 aa)) are domain III, AAA+ region. Residues Gly195, Gly197, Lys198, and Thr199 each contribute to the ATP site. The interval 372 to 494 (SFESDLSLER…LKRLIGEQAA (123 aa)) is domain IV, binds dsDNA.

Belongs to the DnaA family. As to quaternary structure, oligomerizes as a right-handed, spiral filament on DNA at oriC.

Its subcellular location is the cytoplasm. Functionally, plays an essential role in the initiation and regulation of chromosomal replication. ATP-DnaA binds to the origin of replication (oriC) to initiate formation of the DNA replication initiation complex once per cell cycle. Binds the DnaA box (a 9 base pair repeat at the origin) and separates the double-stranded (ds)DNA. Forms a right-handed helical filament on oriC DNA; dsDNA binds to the exterior of the filament while single-stranded (ss)DNA is stabiized in the filament's interior. The ATP-DnaA-oriC complex binds and stabilizes one strand of the AT-rich DNA unwinding element (DUE), permitting loading of DNA polymerase. After initiation quickly degrades to an ADP-DnaA complex that is not apt for DNA replication. Binds acidic phospholipids. This is Chromosomal replication initiator protein DnaA from Bartonella quintana (strain Toulouse) (Rochalimaea quintana).